Consider the following 681-residue polypeptide: Phosphomethylpyrimidine synthase (681 aa).

Polar residues predominate over residues 1-13; sequence MSNNTTSLPAENS. Residues 1–29 are disordered; the sequence is MSNNTTSLPAENSSHPRKGTPIRKKQREE. Residues 15 to 25 are compositionally biased toward basic residues; it reads HPRKGTPIRKK. Substrate contacts are provided by residues Asn-254, Met-283, Tyr-312, His-348, 368-370, 409-412, and Glu-448; these read SRG and DGLR. Position 452 (His-452) interacts with Zn(2+). Tyr-475 contributes to the substrate binding site. Position 516 (His-516) interacts with Zn(2+). [4Fe-4S] cluster contacts are provided by Cys-596, Cys-599, and Cys-604. Positions 658 to 667 are enriched in basic and acidic residues; the sequence is FRSRGSELYH. A disordered region spans residues 658 to 681; sequence FRSRGSELYHRPANLSAEANNEPT.

The protein belongs to the ThiC family. In terms of assembly, homodimer. It depends on [4Fe-4S] cluster as a cofactor.

It catalyses the reaction 5-amino-1-(5-phospho-beta-D-ribosyl)imidazole + S-adenosyl-L-methionine = 4-amino-2-methyl-5-(phosphooxymethyl)pyrimidine + CO + 5'-deoxyadenosine + formate + L-methionine + 3 H(+). It functions in the pathway cofactor biosynthesis; thiamine diphosphate biosynthesis. Its function is as follows. Catalyzes the synthesis of the hydroxymethylpyrimidine phosphate (HMP-P) moiety of thiamine from aminoimidazole ribotide (AIR) in a radical S-adenosyl-L-methionine (SAM)-dependent reaction. The polypeptide is Phosphomethylpyrimidine synthase (Yersinia pseudotuberculosis serotype I (strain IP32953)).